A 406-amino-acid polypeptide reads, in one-letter code: O-succinylhomoserine sulfhydrylase (406 aa).

K219 is modified (N6-(pyridoxal phosphate)lysine).

It belongs to the trans-sulfuration enzymes family. MetZ subfamily. In terms of assembly, homotetramer. Requires pyridoxal 5'-phosphate as cofactor.

It carries out the reaction O-succinyl-L-homoserine + hydrogen sulfide = L-homocysteine + succinate. Its pathway is amino-acid biosynthesis; L-methionine biosynthesis via de novo pathway; L-homocysteine from O-succinyl-L-homoserine: step 1/1. Catalyzes the formation of L-homocysteine from O-succinyl-L-homoserine (OSHS) and hydrogen sulfide. The polypeptide is O-succinylhomoserine sulfhydrylase (Mycobacterium tuberculosis (strain CDC 1551 / Oshkosh)).